Reading from the N-terminus, the 137-residue chain is Large ribosomal subunit protein uL16 (137 aa).

The protein belongs to the universal ribosomal protein uL16 family. Part of the 50S ribosomal subunit.

Functionally, binds 23S rRNA and is also seen to make contacts with the A and possibly P site tRNAs. This Methylococcus capsulatus (strain ATCC 33009 / NCIMB 11132 / Bath) protein is Large ribosomal subunit protein uL16.